Consider the following 227-residue polypeptide: MIDAFFIAGTDTDVGKTVASKAILDALNMKGLRTAAYKPIAAGSEDKGDGVQNSDAIHLRSVANVELSYDEVNPYALLLPTSPHIAAAAENIVIDYSVLSKGLASLKAKSDIVLVEGAGGWRVPVSKSDCLSTWVQQEKLPVVLVVGIKLGCLSHAMLTEEAIKHDGLDIVGWVANRVNPGTEHYADIIEMLEDKMPAPKLGEIPYMPSIKRKSMGKYINLDSLMEI.

13 to 18 is an ATP binding site; that stretch reads DVGKTV. A Mg(2+)-binding site is contributed by Thr-17. Lys-38 is an active-site residue. Residues Asp-55, 116–119, and 176–177 each bind ATP; these read EGAG and NR. Mg(2+) is bound by residues Asp-55 and Glu-116.

Belongs to the dethiobiotin synthetase family. As to quaternary structure, homodimer. Mg(2+) serves as cofactor.

Its subcellular location is the cytoplasm. It carries out the reaction (7R,8S)-7,8-diammoniononanoate + CO2 + ATP = (4R,5S)-dethiobiotin + ADP + phosphate + 3 H(+). The protein operates within cofactor biosynthesis; biotin biosynthesis; biotin from 7,8-diaminononanoate: step 1/2. Catalyzes a mechanistically unusual reaction, the ATP-dependent insertion of CO2 between the N7 and N8 nitrogen atoms of 7,8-diaminopelargonic acid (DAPA, also called 7,8-diammoniononanoate) to form a ureido ring. The protein is ATP-dependent dethiobiotin synthetase BioD of Aliivibrio salmonicida (strain LFI1238) (Vibrio salmonicida (strain LFI1238)).